Consider the following 81-residue polypeptide: Large ribosomal subunit protein bL28 (81 aa).

The protein belongs to the bacterial ribosomal protein bL28 family.

This chain is Large ribosomal subunit protein bL28, found in Gloeobacter violaceus (strain ATCC 29082 / PCC 7421).